Here is a 536-residue protein sequence, read N- to C-terminus: Probable cytochrome P450 12a5, mitochondrial (536 aa).

Cys482 serves as a coordination point for heme.

The protein belongs to the cytochrome P450 family. Heme serves as cofactor.

It is found in the mitochondrion membrane. The sequence is that of Probable cytochrome P450 12a5, mitochondrial (Cyp12a5) from Drosophila melanogaster (Fruit fly).